The sequence spans 345 residues: MRVAVDAMGGDNAPAIEVEGAVAASRQYGIPIILVGDEDRLRQELDHHAASGLDITIHHASEVVGMHDSASDAVRKKRNSSVRLAFELVKDGQACAAVSAGNSGATMAAGMFVLKRISGIERPAIAQVFPTLEGKTLVLDVGGNVDCKASHLVQFAIMGQVYAKHALGIPNPRIGLLSNGEEDSKGNELTRETNAILRQTSLNYAGYVEGRDIFKGTVEVVVCDGFVGNVVLKLSEGLAEATGTMLKREIMGDMIAKMGYLFMRGAFKRFKKTVDYAEYGGAPLIGINGVGMICHGGSNAKAIKNAIRFAHDYATSGVTQRIAEKLSENYGALFPRTGQSVPPVS.

The protein belongs to the PlsX family. As to quaternary structure, homodimer. Probably interacts with PlsY.

The protein resides in the cytoplasm. It carries out the reaction a fatty acyl-[ACP] + phosphate = an acyl phosphate + holo-[ACP]. Its pathway is lipid metabolism; phospholipid metabolism. Functionally, catalyzes the reversible formation of acyl-phosphate (acyl-PO(4)) from acyl-[acyl-carrier-protein] (acyl-ACP). This enzyme utilizes acyl-ACP as fatty acyl donor, but not acyl-CoA. The protein is Phosphate acyltransferase of Trichlorobacter lovleyi (strain ATCC BAA-1151 / DSM 17278 / SZ) (Geobacter lovleyi).